The primary structure comprises 1237 residues: Clustered mitochondria protein homolog (1237 aa).

A Clu domain is found at 291–535 (DITRSQENCL…RITPLDVAWS (245 aa)). 2 stretches are compositionally biased toward basic and acidic residues: residues 575 to 597 (RKTAKREAEKTKAVEAQNEDKAE) and 845 to 854 (SQIKSQEHSP). Disordered regions lie at residues 575–614 (RKTAKREAEKTKAVEAQNEDKAELLSTSDPGEGENKAVAS) and 845–886 (SQIK…VAAS). 3 TPR repeats span residues 957–990 (AKLYHQLSMLYYQTDEKEAAVELARKAVIVTERT), 999–1032 (ILSYLNLSLFEHASGNTHTALIYIRHALELWKII), and 1041–1074 (ITTMNNAAVMLQHLKKYPDSRKWFEASLTVCEGL). 2 disordered regions span residues 1152 to 1189 (RLRRTNLSPRMTIGTKPQPQVGQNAPATTNGATSKSIG) and 1201 to 1237 (FIEGGGESRSPRSKQKKRAAASNPKLRGSKQSTVQTA). Residues 1156–1187 (TNLSPRMTIGTKPQPQVGQNAPATTNGATSKS) show a composition bias toward polar residues.

Belongs to the CLU family. In terms of assembly, may associate with the eukaryotic translation initiation factor 3 (eIF-3) complex.

The protein resides in the cytoplasm. In terms of biological role, mRNA-binding protein involved in proper cytoplasmic distribution of mitochondria. The sequence is that of Clustered mitochondria protein homolog from Ajellomyces capsulatus (strain NAm1 / WU24) (Darling's disease fungus).